A 392-amino-acid polypeptide reads, in one-letter code: L-rhamnonate dehydratase (392 aa).

Substrate is bound by residues histidine 22 and arginine 48. Aspartate 214, glutamate 240, and glutamate 268 together coordinate Mg(2+). Histidine 318 functions as the Proton acceptor in the catalytic mechanism. Substrate is bound at residue glutamate 338.

It belongs to the mandelate racemase/muconate lactonizing enzyme family. RhamD subfamily. Homooctamer; tetramer of dimers. The cofactor is Mg(2+).

The enzyme catalyses L-rhamnonate = 2-dehydro-3-deoxy-L-rhamnonate + H2O. Functionally, catalyzes the dehydration of L-rhamnonate to 2-keto-3-deoxy-L-rhamnonate (KDR). The protein is L-rhamnonate dehydratase of Paraburkholderia phytofirmans (strain DSM 17436 / LMG 22146 / PsJN) (Burkholderia phytofirmans).